Here is a 48-residue protein sequence, read N- to C-terminus: Large ribosomal subunit protein eL40 (48 aa).

It belongs to the eukaryotic ribosomal protein eL40 family.

This chain is Large ribosomal subunit protein eL40, found in Methanoregula boonei (strain DSM 21154 / JCM 14090 / 6A8).